Here is a 425-residue protein sequence, read N- to C-terminus: Interferon regulatory factor 8 (425 aa).

The segment at residues 7-114 (GRRLRQWLIE…EPYKVYRIVP (108 aa)) is a DNA-binding region (IRF tryptophan pentad repeat).

It belongs to the IRF family.

Its subcellular location is the nucleus. It is found in the cytoplasm. Functionally, plays a role as a transcriptional activator or repressor. Specifically binds to the upstream regulatory region of type I IFN and IFN-inducible MHC class I genes (the interferon consensus sequence (ICS)). Plays a regulatory role in cells of the immune system. This is Interferon regulatory factor 8 (IRF8) from Gallus gallus (Chicken).